We begin with the raw amino-acid sequence, 331 residues long: Ketol-acid reductoisomerase (NADP(+)) (331 aa).

The KARI N-terminal Rossmann domain occupies 2–182 (AQLFYDSDAD…GGTRAGILET (181 aa)). Residues 25–28 (YGSQ), S51, S53, and 83–86 (DEFQ) each bind NADP(+). The active site involves H108. Residue G134 coordinates NADP(+). One can recognise a KARI C-terminal knotted domain in the interval 183–328 (NFKEETETDL…KGLRAMFSWL (146 aa)). D191, E195, E227, and E231 together coordinate Mg(2+). S252 is a substrate binding site.

The protein belongs to the ketol-acid reductoisomerase family. Requires Mg(2+) as cofactor.

It carries out the reaction (2R)-2,3-dihydroxy-3-methylbutanoate + NADP(+) = (2S)-2-acetolactate + NADPH + H(+). The enzyme catalyses (2R,3R)-2,3-dihydroxy-3-methylpentanoate + NADP(+) = (S)-2-ethyl-2-hydroxy-3-oxobutanoate + NADPH + H(+). Its pathway is amino-acid biosynthesis; L-isoleucine biosynthesis; L-isoleucine from 2-oxobutanoate: step 2/4. It functions in the pathway amino-acid biosynthesis; L-valine biosynthesis; L-valine from pyruvate: step 2/4. Involved in the biosynthesis of branched-chain amino acids (BCAA). Catalyzes an alkyl-migration followed by a ketol-acid reduction of (S)-2-acetolactate (S2AL) to yield (R)-2,3-dihydroxy-isovalerate. In the isomerase reaction, S2AL is rearranged via a Mg-dependent methyl migration to produce 3-hydroxy-3-methyl-2-ketobutyrate (HMKB). In the reductase reaction, this 2-ketoacid undergoes a metal-dependent reduction by NADPH to yield (R)-2,3-dihydroxy-isovalerate. In Prochlorococcus marinus (strain MIT 9303), this protein is Ketol-acid reductoisomerase (NADP(+)).